A 54-amino-acid chain; its full sequence is Sec-independent protein translocase protein TatA (54 aa).

The chain crosses the membrane as a helical span at residues 1–21 (MGMSFSHLLIVLLIIFVLFGA).

The protein belongs to the TatA/E family. In terms of assembly, the Tat system comprises two distinct complexes: a TatABC complex, containing multiple copies of TatA, TatB and TatC subunits, and a separate TatA complex, containing only TatA subunits. Substrates initially bind to the TatABC complex, which probably triggers association of the separate TatA complex to form the active translocon.

Its subcellular location is the cell inner membrane. Its function is as follows. Part of the twin-arginine translocation (Tat) system that transports large folded proteins containing a characteristic twin-arginine motif in their signal peptide across membranes. TatA could form the protein-conducting channel of the Tat system. In Rickettsia canadensis (strain McKiel), this protein is Sec-independent protein translocase protein TatA.